Consider the following 358-residue polypeptide: UDP-N-acetylglucosamine--N-acetylmuramyl-(pentapeptide) pyrophosphoryl-undecaprenol N-acetylglucosamine transferase (358 aa).

UDP-N-acetyl-alpha-D-glucosamine-binding positions include 11–13 (TGG), Asn-122, Arg-161, Ser-189, Ile-243, 262–267 (ALTVCE), and Gln-288.

The protein belongs to the glycosyltransferase 28 family. MurG subfamily.

It localises to the cell inner membrane. The catalysed reaction is di-trans,octa-cis-undecaprenyl diphospho-N-acetyl-alpha-D-muramoyl-L-alanyl-D-glutamyl-meso-2,6-diaminopimeloyl-D-alanyl-D-alanine + UDP-N-acetyl-alpha-D-glucosamine = di-trans,octa-cis-undecaprenyl diphospho-[N-acetyl-alpha-D-glucosaminyl-(1-&gt;4)]-N-acetyl-alpha-D-muramoyl-L-alanyl-D-glutamyl-meso-2,6-diaminopimeloyl-D-alanyl-D-alanine + UDP + H(+). It functions in the pathway cell wall biogenesis; peptidoglycan biosynthesis. Functionally, cell wall formation. Catalyzes the transfer of a GlcNAc subunit on undecaprenyl-pyrophosphoryl-MurNAc-pentapeptide (lipid intermediate I) to form undecaprenyl-pyrophosphoryl-MurNAc-(pentapeptide)GlcNAc (lipid intermediate II). This is UDP-N-acetylglucosamine--N-acetylmuramyl-(pentapeptide) pyrophosphoryl-undecaprenol N-acetylglucosamine transferase from Coxiella burnetii (strain Dugway 5J108-111).